The primary structure comprises 141 residues: Large ribosomal subunit protein uL11 (141 aa).

This sequence belongs to the universal ribosomal protein uL11 family. Part of the ribosomal stalk of the 50S ribosomal subunit. Interacts with L10 and the large rRNA to form the base of the stalk. L10 forms an elongated spine to which L12 dimers bind in a sequential fashion forming a multimeric L10(L12)X complex. In terms of processing, one or more lysine residues are methylated.

In terms of biological role, forms part of the ribosomal stalk which helps the ribosome interact with GTP-bound translation factors. In Synechococcus sp. (strain JA-2-3B'a(2-13)) (Cyanobacteria bacterium Yellowstone B-Prime), this protein is Large ribosomal subunit protein uL11.